We begin with the raw amino-acid sequence, 213 residues long: Pyrrolidone-carboxylate peptidase (213 aa).

Catalysis depends on residues E81, C144, and H166.

This sequence belongs to the peptidase C15 family. Homotetramer.

It localises to the cytoplasm. The catalysed reaction is Release of an N-terminal pyroglutamyl group from a polypeptide, the second amino acid generally not being Pro.. Its function is as follows. Removes 5-oxoproline from various penultimate amino acid residues except L-proline. This Pseudomonas fluorescens (strain SBW25) protein is Pyrrolidone-carboxylate peptidase.